The following is a 336-amino-acid chain: MSEQTTFAPSRTDGVEAHKTLRVLLAGPRGFCAGVDRAIRVVEEALRRYGAPVYVRHEIVHNRTVVEGLEAKGAIFVEELDEVPEDGHVVFSAHGVPKAVPAEAQRRNLLYLDATCPLVSKVHREAERHFAGGGPDQRHILMIGHAGHPEVVGTMGQLPPGAVTLINDAEEARTIQPEDPTKLAFITQTTLSVDDTAEIVDILRSRFPLIEGPKREDICYATTNRQEAVKAIAPESDLVIVIGSPNSSNSQRLREVAERSGARRALLVPKLENLDWSVLEGVETLGISAGASAPESLVQEMVTALAGKYTLKIEERIVKEENINFRLPGPLAGEDD.

Residue C32 participates in [4Fe-4S] cluster binding. (2E)-4-hydroxy-3-methylbut-2-enyl diphosphate-binding residues include H61 and H94. Residues H61 and H94 each contribute to the dimethylallyl diphosphate site. Isopentenyl diphosphate contacts are provided by H61 and H94. A [4Fe-4S] cluster-binding site is contributed by C116. Residue H148 coordinates (2E)-4-hydroxy-3-methylbut-2-enyl diphosphate. H148 contributes to the dimethylallyl diphosphate binding site. Residue H148 participates in isopentenyl diphosphate binding. E150 serves as the catalytic Proton donor. T189 provides a ligand contact to (2E)-4-hydroxy-3-methylbut-2-enyl diphosphate. Position 219 (C219) interacts with [4Fe-4S] cluster. (2E)-4-hydroxy-3-methylbut-2-enyl diphosphate is bound by residues S247, S248, N249, and S292. The dimethylallyl diphosphate site is built by S247, S248, N249, and S292. S247, S248, N249, and S292 together coordinate isopentenyl diphosphate.

The protein belongs to the IspH family. The cofactor is [4Fe-4S] cluster.

It carries out the reaction isopentenyl diphosphate + 2 oxidized [2Fe-2S]-[ferredoxin] + H2O = (2E)-4-hydroxy-3-methylbut-2-enyl diphosphate + 2 reduced [2Fe-2S]-[ferredoxin] + 2 H(+). The enzyme catalyses dimethylallyl diphosphate + 2 oxidized [2Fe-2S]-[ferredoxin] + H2O = (2E)-4-hydroxy-3-methylbut-2-enyl diphosphate + 2 reduced [2Fe-2S]-[ferredoxin] + 2 H(+). Its pathway is isoprenoid biosynthesis; dimethylallyl diphosphate biosynthesis; dimethylallyl diphosphate from (2E)-4-hydroxy-3-methylbutenyl diphosphate: step 1/1. It functions in the pathway isoprenoid biosynthesis; isopentenyl diphosphate biosynthesis via DXP pathway; isopentenyl diphosphate from 1-deoxy-D-xylulose 5-phosphate: step 6/6. Functionally, catalyzes the conversion of 1-hydroxy-2-methyl-2-(E)-butenyl 4-diphosphate (HMBPP) into a mixture of isopentenyl diphosphate (IPP) and dimethylallyl diphosphate (DMAPP). Acts in the terminal step of the DOXP/MEP pathway for isoprenoid precursor biosynthesis. The chain is 4-hydroxy-3-methylbut-2-enyl diphosphate reductase from Gluconobacter oxydans (strain 621H) (Gluconobacter suboxydans).